A 275-amino-acid chain; its full sequence is NH(3)-dependent NAD(+) synthetase (275 aa).

39-46 is a binding site for ATP; that stretch reads GLSGGVDS. Asp-45 is a binding site for Mg(2+). Arg-124 contacts deamido-NAD(+). Position 144 (Thr-144) interacts with ATP. Glu-149 is a Mg(2+) binding site. Deamido-NAD(+) contacts are provided by Lys-157 and Asp-164. Positions 173 and 195 each coordinate ATP. Position 255–256 (255–256) interacts with deamido-NAD(+); the sequence is HK.

The protein belongs to the NAD synthetase family. As to quaternary structure, homodimer.

It carries out the reaction deamido-NAD(+) + NH4(+) + ATP = AMP + diphosphate + NAD(+) + H(+). The protein operates within cofactor biosynthesis; NAD(+) biosynthesis; NAD(+) from deamido-NAD(+) (ammonia route): step 1/1. Its function is as follows. Catalyzes the ATP-dependent amidation of deamido-NAD to form NAD. Uses ammonia as a nitrogen source. This Staphylothermus marinus (strain ATCC 43588 / DSM 3639 / JCM 9404 / F1) protein is NH(3)-dependent NAD(+) synthetase.